Consider the following 365-residue polypeptide: MPTFTHRIYNFNAGPAMLPTEVMEEAKSEFLNFRGTGMSVMEMSHREKHFQSILDESISDLRELLNLPSRYAVVYFPGGATLQFSAIPFNYLSSGDSCDFALTGVWAKKAFEEAKKFYPNVKSIFNGADSKYMELPTITDESVNDGAKYMYITSNNTIYGTRYKTFPKLKKAPLIADMTSELLSRKLPIEDFSVIFAGAQKNIGPSGLTLVIYDKEKLPEVSHPIPNLMNFALMEKNGSLYNTPPTYSIYIAGLVFKYLKRKGGLAVMEETNERKAKKLYDAIDSSSLFYAPVPVPFRSAMNVVFRSHNDGLDSKFLSLAEEQGFAGLKGYREVGGFRASIYNAMPEEGVDALISFMKEFERSNG.

Arg46 contributes to the L-glutamate binding site. Pyridoxal 5'-phosphate contacts are provided by residues 80–81 (AT), Trp106, Thr157, Asp177, and Gln200. N6-(pyridoxal phosphate)lysine is present on Lys201. 242–243 (NT) contributes to the pyridoxal 5'-phosphate binding site.

Belongs to the class-V pyridoxal-phosphate-dependent aminotransferase family. SerC subfamily. In terms of assembly, homodimer. It depends on pyridoxal 5'-phosphate as a cofactor.

It localises to the cytoplasm. The catalysed reaction is O-phospho-L-serine + 2-oxoglutarate = 3-phosphooxypyruvate + L-glutamate. It carries out the reaction 4-(phosphooxy)-L-threonine + 2-oxoglutarate = (R)-3-hydroxy-2-oxo-4-phosphooxybutanoate + L-glutamate. Its pathway is amino-acid biosynthesis; L-serine biosynthesis; L-serine from 3-phospho-D-glycerate: step 2/3. The protein operates within cofactor biosynthesis; pyridoxine 5'-phosphate biosynthesis; pyridoxine 5'-phosphate from D-erythrose 4-phosphate: step 3/5. Catalyzes the reversible conversion of 3-phosphohydroxypyruvate to phosphoserine and of 3-hydroxy-2-oxo-4-phosphonooxybutanoate to phosphohydroxythreonine. This Leptospira biflexa serovar Patoc (strain Patoc 1 / Ames) protein is Phosphoserine aminotransferase.